Consider the following 239-residue polypeptide: Glutathione S-transferase verG (239 aa).

Residues 18-101 form the GST N-terminal domain; that stretch reads KPLIFVMEGR…YLSNKYDAKR (84 aa). The GST C-terminal domain occupies 107-237; that stretch reads NAAENLEICN…ELDSRKEIAI (131 aa).

This sequence belongs to the GST superfamily.

The catalysed reaction is RX + glutathione = an S-substituted glutathione + a halide anion + H(+). It functions in the pathway mycotoxin biosynthesis. In terms of biological role, glutathione S-transferase; part of the gene cluster that mediates the biosynthesis of 11'-deoxyverticillin A, one of the dimeric epipolythiodioxopiperazines (ETPs) from the verticillin family that act as mycotoxins. 11'-deoxyverticillin A is required for normal conidiation. The nonribosomal peptide synthetase verP is speculated to be responsible for condensation of amino acids to form the carbon skeleton of verticillin, whereas the cluster-specific tailoring enzymes are involved in further modifications leading to the production of 11'-deoxyverticillin A. The chain is Glutathione S-transferase verG from Clonostachys rogersoniana.